A 180-amino-acid chain; its full sequence is MRMRMQDVAPQDYRDAMACLGAAVNIVTTDGSAGRAGFTASAICSVTDDPPTLLVCINRGSSAYSSVTRNEVVCVNVLSARHEPLSRLFGGKVPADERFAAAAWSTLATGAPVLADCSAAFDCRIADTVNVGTHDVLFCRVVALQRFGCTDNLIYFGRAYHTVGVTDPAEAGPESALDAS.

The protein belongs to the non-flavoprotein flavin reductase family. RutF subfamily.

It carries out the reaction FMNH2 + NAD(+) = FMN + NADH + 2 H(+). Functionally, catalyzes the reduction of FMN to FMNH2 which is used to reduce pyrimidine by RutA via the Rut pathway. The polypeptide is FMN reductase (NADH) RutF (Bradyrhizobium diazoefficiens (strain JCM 10833 / BCRC 13528 / IAM 13628 / NBRC 14792 / USDA 110)).